We begin with the raw amino-acid sequence, 877 residues long: Alanine--tRNA ligase (877 aa).

Zn(2+) is bound by residues His567, His571, Cys669, and His673.

The protein belongs to the class-II aminoacyl-tRNA synthetase family. It depends on Zn(2+) as a cofactor.

The protein localises to the cytoplasm. It catalyses the reaction tRNA(Ala) + L-alanine + ATP = L-alanyl-tRNA(Ala) + AMP + diphosphate. Catalyzes the attachment of alanine to tRNA(Ala) in a two-step reaction: alanine is first activated by ATP to form Ala-AMP and then transferred to the acceptor end of tRNA(Ala). Also edits incorrectly charged Ser-tRNA(Ala) and Gly-tRNA(Ala) via its editing domain. The chain is Alanine--tRNA ligase from Lactobacillus delbrueckii subsp. bulgaricus (strain ATCC 11842 / DSM 20081 / BCRC 10696 / JCM 1002 / NBRC 13953 / NCIMB 11778 / NCTC 12712 / WDCM 00102 / Lb 14).